The following is a 177-amino-acid chain: ATP synthase subunit delta (177 aa).

The protein belongs to the ATPase delta chain family. As to quaternary structure, F-type ATPases have 2 components, F(1) - the catalytic core - and F(0) - the membrane proton channel. F(1) has five subunits: alpha(3), beta(3), gamma(1), delta(1), epsilon(1). F(0) has three main subunits: a(1), b(2) and c(10-14). The alpha and beta chains form an alternating ring which encloses part of the gamma chain. F(1) is attached to F(0) by a central stalk formed by the gamma and epsilon chains, while a peripheral stalk is formed by the delta and b chains.

The protein resides in the cell inner membrane. Its function is as follows. F(1)F(0) ATP synthase produces ATP from ADP in the presence of a proton or sodium gradient. F-type ATPases consist of two structural domains, F(1) containing the extramembraneous catalytic core and F(0) containing the membrane proton channel, linked together by a central stalk and a peripheral stalk. During catalysis, ATP synthesis in the catalytic domain of F(1) is coupled via a rotary mechanism of the central stalk subunits to proton translocation. This protein is part of the stalk that links CF(0) to CF(1). It either transmits conformational changes from CF(0) to CF(1) or is implicated in proton conduction. In Shewanella putrefaciens (strain CN-32 / ATCC BAA-453), this protein is ATP synthase subunit delta.